Reading from the N-terminus, the 33-residue chain is Cytochrome b6-f complex subunit 8 (33 aa).

The helical transmembrane segment at Ile2–Val22 threads the bilayer.

This sequence belongs to the PetN family. The 4 large subunits of the cytochrome b6-f complex are cytochrome b6, subunit IV (17 kDa polypeptide, PetD), cytochrome f and the Rieske protein, while the 4 small subunits are PetG, PetL, PetM and PetN. The complex functions as a dimer.

It is found in the cellular thylakoid membrane. In terms of biological role, component of the cytochrome b6-f complex, which mediates electron transfer between photosystem II (PSII) and photosystem I (PSI), cyclic electron flow around PSI, and state transitions. This Prochlorococcus marinus (strain MIT 9301) protein is Cytochrome b6-f complex subunit 8.